The following is a 632-amino-acid chain: PAN2-PAN3 deadenylation complex subunit PAN3 (632 aa).

Disordered regions lie at residues 1–22 (MQPG…PHQL) and 99–127 (PTFG…PPTL). Positions 107-116 (MNHRASHHHQ) are enriched in basic residues. Over residues 117–127 (SPQMAQQPPTL) the composition is skewed to polar residues. A pseudokinase domain region spans residues 223-494 (KADSAIIGDI…TINEIMPMIG (272 aa)). ATP-binding positions include Arg270, 321–328 (DYYPLAGT), and 397–398 (NK). Positions 495–533 (GRFFTVMENMQAKTDVLEAELSREMENGRLFRLVAKMNT) form a coiled coil. Residues 534-632 (VLERVEHGTD…LLGTNMMLHR (99 aa)) form a knob domain region.

This sequence belongs to the protein kinase superfamily. PAN3 family. As to quaternary structure, homodimer. Forms a heterotrimer with a catalytic subunit PAN2 to form the poly(A)-nuclease (PAN) deadenylation complex. Interacts (via PAM-2 motif) with poly(A)-binding protein (via PABC domain), conferring substrate specificity of the enzyme complex. Interacts with the GW182 family protein ain-1. As to expression, highly expressed in germ cells.

The protein localises to the cytoplasm. It is found in the P-body. Regulatory subunit of the poly(A)-nuclease (PAN) deadenylation complex, one of two cytoplasmic mRNA deadenylases involved in general and miRNA-mediated mRNA turnover. PAN specifically shortens poly(A) tails of RNA and the activity is stimulated by poly(A)-binding protein (PABP). PAN deadenylation is followed by rapid degradation of the shortened mRNA tails by the CCR4-NOT complex. Deadenylated mRNAs are then degraded by two alternative mechanisms, namely exosome-mediated 3'-5' exonucleolytic degradation, or deadenylation-dependent mRNA decaping and subsequent 5'-3' exonucleolytic degradation by XRN1. PAN3 acts as a positive regulator for PAN activity, recruiting the catalytic subunit PAN2 to mRNA via its interaction with RNA and PABP, and to miRNA targets via its interaction with GW182 family proteins. Within the PAN complex, may positively regulate fertility. This is PAN2-PAN3 deadenylation complex subunit PAN3 from Caenorhabditis elegans.